A 637-amino-acid chain; its full sequence is tRNA uridine 5-carboxymethylaminomethyl modification enzyme MnmG (637 aa).

18–23 (GAGHAG) is an FAD binding site. Residue 281-295 (GPRYCPSIEDKIVRF) coordinates NAD(+).

The protein belongs to the MnmG family. In terms of assembly, homodimer. Heterotetramer of two MnmE and two MnmG subunits. FAD is required as a cofactor.

The protein resides in the cytoplasm. In terms of biological role, NAD-binding protein involved in the addition of a carboxymethylaminomethyl (cmnm) group at the wobble position (U34) of certain tRNAs, forming tRNA-cmnm(5)s(2)U34. The polypeptide is tRNA uridine 5-carboxymethylaminomethyl modification enzyme MnmG (Ligilactobacillus salivarius (strain UCC118) (Lactobacillus salivarius)).